The chain runs to 214 residues: Probable transaldolase (214 aa).

Catalysis depends on lysine 83, which acts as the Schiff-base intermediate with substrate.

The protein belongs to the transaldolase family. Type 3B subfamily.

Its subcellular location is the cytoplasm. The enzyme catalyses D-sedoheptulose 7-phosphate + D-glyceraldehyde 3-phosphate = D-erythrose 4-phosphate + beta-D-fructose 6-phosphate. It functions in the pathway carbohydrate degradation; pentose phosphate pathway; D-glyceraldehyde 3-phosphate and beta-D-fructose 6-phosphate from D-ribose 5-phosphate and D-xylulose 5-phosphate (non-oxidative stage): step 2/3. Functionally, transaldolase is important for the balance of metabolites in the pentose-phosphate pathway. The protein is Probable transaldolase of Desulfosudis oleivorans (strain DSM 6200 / JCM 39069 / Hxd3) (Desulfococcus oleovorans).